A 774-amino-acid polypeptide reads, in one-letter code: Formin-like protein 13 (774 aa).

Positions 1 to 22 (MRRRVALSTAIALLVGAQLCVA) are cleaved as a signal peptide. Positions 51–67 (PPPPMSGSEAVPPPPPA) are enriched in pro residues. The tract at residues 51–78 (PPPPMSGSEAVPPPPPAAAASATTGGGR) is disordered. Residues 68–78 (AAASATTGGGR) are compositionally biased toward low complexity. Residues 89 to 109 (IALSAGLVALAVASYSCCLLL) traverse the membrane as a helical segment. 4 disordered regions span residues 130-163 (AAAA…DAIY), 176-338 (HEKS…HLKP), 374-402 (FLNS…RRLL), and 740-774 (GSGK…SSSS). The segment covering 194 to 216 (DLRPLPPLKRPESQPPPPPPSTP) has biased composition (pro residues). A compositionally biased stretch (low complexity) spans 242–261 (SSFSRSTSQHSTLEQTAMPP). The span at 262–286 (MAAPAPPQTNPPRPVRPPPPPPPPR) shows a compositional bias: pro residues. Residues 326 to 749 (GAARPPKPPH…GSGKSFRVPA (424 aa)) form the FH2 domain.

It belongs to the formin-like family. Class-I subfamily.

Its subcellular location is the membrane. The chain is Formin-like protein 13 (FH13) from Oryza sativa subsp. japonica (Rice).